We begin with the raw amino-acid sequence, 75 residues long: ATP synthase subunit c (75 aa).

The next 2 membrane-spanning stretches (helical) occupy residues 8–28 and 52–72; these read FIAI…IANI and IGAA…MLLI.

It belongs to the ATPase C chain family. F-type ATPases have 2 components, F(1) - the catalytic core - and F(0) - the membrane proton channel. F(1) has five subunits: alpha(3), beta(3), gamma(1), delta(1), epsilon(1). F(0) has three main subunits: a(1), b(2) and c(10-14). The alpha and beta chains form an alternating ring which encloses part of the gamma chain. F(1) is attached to F(0) by a central stalk formed by the gamma and epsilon chains, while a peripheral stalk is formed by the delta and b chains.

Its subcellular location is the cell membrane. Its function is as follows. F(1)F(0) ATP synthase produces ATP from ADP in the presence of a proton or sodium gradient. F-type ATPases consist of two structural domains, F(1) containing the extramembraneous catalytic core and F(0) containing the membrane proton channel, linked together by a central stalk and a peripheral stalk. During catalysis, ATP synthesis in the catalytic domain of F(1) is coupled via a rotary mechanism of the central stalk subunits to proton translocation. Functionally, key component of the F(0) channel; it plays a direct role in translocation across the membrane. A homomeric c-ring of between 10-14 subunits forms the central stalk rotor element with the F(1) delta and epsilon subunits. This Wolbachia pipientis wMel protein is ATP synthase subunit c.